Consider the following 61-residue polypeptide: Small ribosomal subunit protein bS21 (61 aa).

The segment at 36–61 is disordered; sequence EHYESPSVKRKKKAEAARKRKYKYGR. The segment covering 43–61 has biased composition (basic residues); the sequence is VKRKKKAEAARKRKYKYGR.

This sequence belongs to the bacterial ribosomal protein bS21 family.

The sequence is that of Small ribosomal subunit protein bS21 (rpsU) from Caldanaerobacter subterraneus subsp. tengcongensis (strain DSM 15242 / JCM 11007 / NBRC 100824 / MB4) (Thermoanaerobacter tengcongensis).